The chain runs to 158 residues: U4/U6.U5 small nuclear ribonucleoprotein 27 kDa protein (158 aa).

The segment at 1-102 (MGRSRSRSPE…AEDLEGKTEE (102 aa)) is disordered. A compositionally biased stretch (basic residues) spans 13-59 (RERRRSRSASRERERRRRERSRSRERRRSRSRSPHRRRSRSPRRHRS). Over residues 66-101 (RLKDRRDDDKKEPKESKGGGSKERQLAAEDLEGKTE) the composition is skewed to basic and acidic residues.

It belongs to the SNUT3 family. Part of a tri-snRNP complex.

The protein resides in the nucleus. Functionally, may play a role in mRNA splicing. This is U4/U6.U5 small nuclear ribonucleoprotein 27 kDa protein (snrnp27) from Xenopus laevis (African clawed frog).